A 426-amino-acid chain; its full sequence is D-cysteine desulfhydrase 1, mitochondrial (426 aa).

The transit peptide at 1 to 63 (MARGAHQAPG…IGSFLSKRPY (63 aa)) directs the protein to the mitochondrion. Lys-119 is modified (N6-(pyridoxal phosphate)lysine). Ser-146 (nucleophile) is an active-site residue.

It belongs to the ACC deaminase/D-cysteine desulfhydrase family. Homodimer. It depends on pyridoxal 5'-phosphate as a cofactor. In terms of tissue distribution, present in seeds (at protein level).

Its subcellular location is the mitochondrion. It carries out the reaction D-cysteine + H2O = hydrogen sulfide + pyruvate + NH4(+) + H(+). Inhibited by L-cysteine (L-cys). In terms of biological role, catalyzes the production of hydrogen sulfide (H2S) from D-cysteine (D-cys). This Oryza sativa subsp. japonica (Rice) protein is D-cysteine desulfhydrase 1, mitochondrial.